The primary structure comprises 130 residues: Small ribosomal subunit protein uS9 (130 aa).

The protein belongs to the universal ribosomal protein uS9 family.

This Xanthomonas axonopodis pv. citri (strain 306) protein is Small ribosomal subunit protein uS9.